An 800-amino-acid chain; its full sequence is Fibroblast growth factor receptor 4 (800 aa).

A signal peptide spans 1–16; it reads MWLLLALLSIFQETPA. Ig-like C2-type domains are found at residues 17–115, 148–236, and 245–345; these read FSLE…LIMD, PQRM…YLLD, and PILQ…AWLT. Residues 17 to 367 are Extracellular-facing; that stretch reads FSLEASEEME…TATSEARYTD (351 aa). A disulfide bridge links cysteine 54 with cysteine 98. Asparagine 109 carries N-linked (GlcNAc...) asparagine glycosylation. Residues cysteine 168 and cysteine 220 are joined by a disulfide bond. 3 N-linked (GlcNAc...) asparagine glycosylation sites follow: asparagine 254, asparagine 286, and asparagine 307. Cysteine 267 and cysteine 329 are joined by a disulfide. Residues 368-388 traverse the membrane as a helical segment; it reads IILYVSGSLALVLLLLLAGVY. Over 389–800 the chain is Cytoplasmic; the sequence is HRQAIHGHHS…PFPFPEAQTT (412 aa). Positions 465-753 constitute a Protein kinase domain; sequence LVLGKPLGEG…VLLAVSEEYL (289 aa). Residues 471-479 and lysine 501 contribute to the ATP site; that span reads LGEGCFGQV. Serine 571 is modified (phosphoserine). Aspartate 610 (proton acceptor) is an active-site residue. Residues tyrosine 640, tyrosine 641, and tyrosine 752 each carry the phosphotyrosine; by autocatalysis modification. The segment at 768–800 is disordered; that stretch reads DASSTCSSSDSVFSHDPLPLEPSPFPFPEAQTT. Residues 770–781 show a composition bias toward low complexity; the sequence is SSTCSSSDSVFS.

This sequence belongs to the protein kinase superfamily. Tyr protein kinase family. Fibroblast growth factor receptor subfamily. Monomer. Homodimer after ligand binding. Interacts with FGF1, FGF2, FGF4, FGF6, FGF8, FGF9, FGF16, FGF17, FGF18, FGF19, FGF21 and FGF23 (in vitro). Binding affinity for FGF family members is enhanced by interactions between FGFs and heparan sulfate proteoglycans. Interacts with KLB; this strongly increases the affinity for FGF19 and FGF23. Affinity for FGF19 is strongly increased by KLB and sulfated glycosaminoglycans. KLB and KL both interact with the core-glycosylated FGFR4 in the endoplasmic reticulum and promote its degradation, so that only FGFR4 with fully mature N-glycans is expressed at the cell surface. Identified in a complex with NCAM1, CDH2, PLCG1, FRS2, SRC, SHC1, GAP43 and CTTN. Interacts with MMP14 and HIP1. Interacts with STAT3. In terms of processing, N-glycosylated. Full maturation of the glycan chains in the Golgi is essential for high affinity interaction with FGF19. Post-translationally, ubiquitinated. Subject to proteasomal degradation when not fully glycosylated. Autophosphorylated. Binding of FGF family members together with heparan sulfate proteoglycan or heparin promotes receptor dimerization and autophosphorylation on tyrosine residues. Autophosphorylation occurs in trans between the two FGFR molecules present in the dimer.

Its subcellular location is the cell membrane. The protein localises to the endosome. It localises to the endoplasmic reticulum. It catalyses the reaction L-tyrosyl-[protein] + ATP = O-phospho-L-tyrosyl-[protein] + ADP + H(+). Its activity is regulated as follows. Present in an inactive conformation in the absence of bound ligand. Ligand binding leads to dimerization and activation by autophosphorylation on tyrosine residues. Functionally, tyrosine-protein kinase that acts as a cell-surface receptor for fibroblast growth factors and plays a role in the regulation of cell proliferation, differentiation and migration, and in regulation of lipid metabolism, bile acid biosynthesis, glucose uptake, vitamin D metabolism and phosphate homeostasis. Required for normal down-regulation of the expression of CYP7A1, the rate-limiting enzyme in bile acid synthesis, in response to FGF19. Phosphorylates PLCG1 and FRS2. Ligand binding leads to the activation of several signaling cascades. Activation of PLCG1 leads to the production of the cellular signaling molecules diacylglycerol and inositol 1,4,5-trisphosphate. Phosphorylation of FRS2 triggers recruitment of GRB2, GAB1, PIK3R1 and SOS1, and mediates activation of RAS, MAPK1/ERK2, MAPK3/ERK1 and the MAP kinase signaling pathway, as well as of the AKT1 signaling pathway. Promotes SRC-dependent phosphorylation of the matrix protease MMP14 and its lysosomal degradation. FGFR4 signaling is down-regulated by receptor internalization and degradation; MMP14 promotes internalization and degradation of FGFR4. This chain is Fibroblast growth factor receptor 4 (Fgfr4), found in Rattus norvegicus (Rat).